Here is a 60-residue protein sequence, read N- to C-terminus: Large ribosomal subunit protein uL30 (60 aa).

This sequence belongs to the universal ribosomal protein uL30 family. Part of the 50S ribosomal subunit.

This Shewanella loihica (strain ATCC BAA-1088 / PV-4) protein is Large ribosomal subunit protein uL30.